The chain runs to 107 residues: Iron-binding protein IscA (107 aa).

Positions 35, 99, and 101 each coordinate Fe cation.

This sequence belongs to the HesB/IscA family. In terms of assembly, homodimer; may form tetramers and higher multimers. It depends on Fe cation as a cofactor.

Functionally, is able to transfer iron-sulfur clusters to apo-ferredoxin. Multiple cycles of [2Fe2S] cluster formation and transfer are observed, suggesting that IscA acts catalytically. Recruits intracellular free iron so as to provide iron for the assembly of transient iron-sulfur cluster in IscU in the presence of IscS, L-cysteine and the thioredoxin reductase system TrxA/TrxB. In Pectobacterium carotovorum subsp. carotovorum (strain PC1), this protein is Iron-binding protein IscA.